The following is a 1155-amino-acid chain: ATP-dependent helicase/deoxyribonuclease subunit B (1155 aa).

In terms of domain architecture, UvrD-like helicase ATP-binding spans 1 to 278 (MSQLNAYIGR…FTKQERFENR (278 aa)). Position 9-16 (9-16 (GRAGTGKS)) interacts with ATP. A UvrD-like helicase C-terminal domain is found at 270-584 (TKQERFENRD…SIGSMDLAKV (315 aa)). Cys-785, Cys-1112, Cys-1115, and Cys-1121 together coordinate [4Fe-4S] cluster.

The protein belongs to the helicase family. AddB/RexB type 1 subfamily. Heterodimer of AddA and AddB. It depends on Mg(2+) as a cofactor. Requires [4Fe-4S] cluster as cofactor.

Its function is as follows. The heterodimer acts as both an ATP-dependent DNA helicase and an ATP-dependent, dual-direction single-stranded exonuclease. Recognizes the chi site generating a DNA molecule suitable for the initiation of homologous recombination. The AddB subunit has 5' -&gt; 3' nuclease activity but not helicase activity. The protein is ATP-dependent helicase/deoxyribonuclease subunit B of Staphylococcus carnosus (strain TM300).